The primary structure comprises 335 residues: tRNA N6-adenosine threonylcarbamoyltransferase (335 aa).

2 residues coordinate Fe cation: histidine 111 and histidine 115. Residues 134–138 (LISGG), aspartate 167, glycine 180, and asparagine 270 contribute to the substrate site. Fe cation is bound at residue aspartate 298.

The protein belongs to the KAE1 / TsaD family. Fe(2+) serves as cofactor.

The protein localises to the cytoplasm. It carries out the reaction L-threonylcarbamoyladenylate + adenosine(37) in tRNA = N(6)-L-threonylcarbamoyladenosine(37) in tRNA + AMP + H(+). Its function is as follows. Required for the formation of a threonylcarbamoyl group on adenosine at position 37 (t(6)A37) in tRNAs that read codons beginning with adenine. Is involved in the transfer of the threonylcarbamoyl moiety of threonylcarbamoyl-AMP (TC-AMP) to the N6 group of A37, together with TsaE and TsaB. TsaD likely plays a direct catalytic role in this reaction. This chain is tRNA N6-adenosine threonylcarbamoyltransferase, found in Nitrosococcus oceani (strain ATCC 19707 / BCRC 17464 / JCM 30415 / NCIMB 11848 / C-107).